A 166-amino-acid chain; its full sequence is Disulfide bond formation protein B (166 aa).

Over 1–11 (MQSFAFSTRAL) the chain is Cytoplasmic. A helical transmembrane segment spans residues 12–28 (FLGLFAVCAGLLGFGLY). Residues 29 to 46 (LQHAVGLEPCPMCIMQRY) lie on the Periplasmic side of the membrane. The cysteines at positions 38 and 41 are disulfide-linked. The helical transmembrane segment at 47–63 (AFVAIALTALVAGLHGP) threads the bilayer. At 64–70 (GRRGTRA) the chain is on the cytoplasmic side. The chain crosses the membrane as a helical span at residues 71-87 (YAAVILLLALAGGGVAL). Residues 88–143 (RQTWMQLYPPEFAECGPDLEFMLGSFPLADALPMIFQGAGDCSKVDWAFLGLSIAN) lie on the Periplasmic side of the membrane. C102 and C129 are disulfide-bonded. Residues 144–162 (WSLVCLTLVAVFAIMMIAR) form a helical membrane-spanning segment. The Cytoplasmic portion of the chain corresponds to 163 to 166 (KRGG).

This sequence belongs to the DsbB family.

The protein resides in the cell inner membrane. Required for disulfide bond formation in some periplasmic proteins. Acts by oxidizing the DsbA protein. This chain is Disulfide bond formation protein B, found in Aromatoleum aromaticum (strain DSM 19018 / LMG 30748 / EbN1) (Azoarcus sp. (strain EbN1)).